Reading from the N-terminus, the 270-residue chain is Imidazoleglycerol-phosphate dehydratase 1, chloroplastic (270 aa).

The N-terminal 62 residues, 1 to 62 (MELSSASAIL…QSQLRQSISC (62 aa)), are a transit peptide targeting the chloroplast. Ser-63 bears the N-acetylserine mark. Substrate contacts are provided by residues Glu-84, 110–118 (HMLDQLASH), 136–140 (HHTNE), Arg-162, and Arg-184. Residues His-110, His-136, His-137, and Glu-140 each contribute to the Mn(2+) site. The Mn(2+) site is built by His-208, His-232, His-233, and Glu-236. Substrate contacts are provided by residues 232 to 240 (HHIIEATFK) and 262 to 264 (SSK). The tract at residues 250 to 270 (TETDPRRGGTIPSSKGVLSRS) is disordered.

The protein belongs to the imidazoleglycerol-phosphate dehydratase family. Mn(2+) serves as cofactor.

Its subcellular location is the plastid. The protein localises to the chloroplast. The catalysed reaction is D-erythro-1-(imidazol-4-yl)glycerol 3-phosphate = 3-(imidazol-4-yl)-2-oxopropyl phosphate + H2O. It participates in amino-acid biosynthesis; L-histidine biosynthesis; L-histidine from 5-phospho-alpha-D-ribose 1-diphosphate: step 6/9. The sequence is that of Imidazoleglycerol-phosphate dehydratase 1, chloroplastic from Arabidopsis thaliana (Mouse-ear cress).